A 242-amino-acid chain; its full sequence is Protein ABHD14A (242 aa).

Residues 6–26 (AALLGLGLLLMFLLYMGLPGP) traverse the membrane as a helical; Signal-anchor for type II membrane protein segment. Asparagine 38 is a glycosylation site (N-linked (GlcNAc...) asparagine). Active-site charge relay system residues include serine 142, aspartate 193, and histidine 220.

This sequence belongs to the AB hydrolase superfamily. ABHD14 family.

The protein localises to the cytoplasm. It is found in the membrane. In terms of biological role, possible role in granule neuron development. The polypeptide is Protein ABHD14A (Rattus norvegicus (Rat)).